A 326-amino-acid polypeptide reads, in one-letter code: Dehydrogenase/reductase SDR family protein 7-like (326 aa).

Residues 1–17 (MKVQDMDKCAPSSDWNV) lie on the Cytoplasmic side of the membrane. The helical; Signal-anchor for type II membrane protein transmembrane segment at 18–38 (LYWVLGTVLMPVALPLAIINI) threads the bilayer. The Peroxisomal segment spans residues 39 to 326 (WQRFQAQKFR…KLENAEKKST (288 aa)). NAD(+) is bound at residue 57-81 (LITGASSGLGESLAHVFYRAGCRVI). A substrate-binding site is contributed by S193. Y206 (proton acceptor) is an active-site residue.

It belongs to the short-chain dehydrogenases/reductases (SDR) family.

It localises to the peroxisome membrane. Its function is as follows. Putative oxidoreductase. The polypeptide is Dehydrogenase/reductase SDR family protein 7-like (Drosophila melanogaster (Fruit fly)).